We begin with the raw amino-acid sequence, 383 residues long: Acetylornithine deacetylase (383 aa).

Residue H80 coordinates Zn(2+). The active site involves D82. A Zn(2+)-binding site is contributed by D112. The active site involves E144. Positions 145, 169, and 355 each coordinate Zn(2+).

This sequence belongs to the peptidase M20A family. ArgE subfamily. In terms of assembly, homodimer. Zn(2+) is required as a cofactor. Requires Co(2+) as cofactor. The cofactor is glutathione.

It localises to the cytoplasm. The catalysed reaction is N(2)-acetyl-L-ornithine + H2O = L-ornithine + acetate. Its pathway is amino-acid biosynthesis; L-arginine biosynthesis; L-ornithine from N(2)-acetyl-L-ornithine (linear): step 1/1. Its function is as follows. Catalyzes the hydrolysis of the amide bond of N(2)-acetylated L-amino acids. Cleaves the acetyl group from N-acetyl-L-ornithine to form L-ornithine, an intermediate in L-arginine biosynthesis pathway, and a branchpoint in the synthesis of polyamines. The protein is Acetylornithine deacetylase of Shigella dysenteriae serotype 1 (strain Sd197).